The chain runs to 500 residues: NAD(P)H-quinone oxidoreductase chain 4, chloroplastic (500 aa).

The next 14 membrane-spanning stretches (helical) occupy residues 4–24, 35–55, 87–107, 113–130, 134–154, 167–187, 208–228, 242–262, 272–292, 305–325, 330–350, 386–406, 416–436, and 462–482; these read FPWLTIIVVFPIFAGSLIFFL, YTICICILELLLTTYAFCYHF, IGPILLTGFITTLATLAAWPV, LFHFLMLAMYSGQIGLFS, LLLFFIMWELELIPVYLLLAM, FILYTAGGSVFLLMGVLGVAL, VLEIIFYIGFFIAFAVKSPII, HYSTCMLLAGILLKMGAYGLI, AHSIFSPWLMIIGTIQIIYAA, IAYSSVSHMGFIIIGISSLTD, GALLQIISHGFIGAALFFLAG, LALPGMSGFVAELIVFFGIIT, LLITFVMAIGIILTPIYSLSM, and LFLSISIFLPVIGIGIYPDFV.

This sequence belongs to the complex I subunit 4 family.

The protein resides in the plastid. The protein localises to the chloroplast thylakoid membrane. The enzyme catalyses a plastoquinone + NADH + (n+1) H(+)(in) = a plastoquinol + NAD(+) + n H(+)(out). It carries out the reaction a plastoquinone + NADPH + (n+1) H(+)(in) = a plastoquinol + NADP(+) + n H(+)(out). This Solanum lycopersicum (Tomato) protein is NAD(P)H-quinone oxidoreductase chain 4, chloroplastic.